Here is a 489-residue protein sequence, read N- to C-terminus: MKYRDLRDFIQLLEQRGQLKRIKQEIDPYLEMTEIADRTLRAQGPALLFENPKGSRYPVLANLFGTPQRVAWGMGQEDVSALRDVGEWMAMLKEPEPPKGLRDLFDKLPLFKQILNMPVKRLSKAPCQDIILTGDDVDLNQLPVQHCWPGDVAPLVTWGLTITKGPYKKRQNLGIYRQQLLAKNKLIMRWLDHRGGAIDFREWQEAHPGEPFPVVVAIGADPATILGAVTPVPDTLSEYAFAGLLRQSRTEVVKALSCDLDVPASAEIVLEGYLMPGETAPEGPYGDHTGYYNEVDDFSVFTITHMTMRKDAIYHSTYTGRPPDEPAMLGVALNEVFVPLVRKQFPEIVDFYLPPEGCSYRMAVVTIKKRYPGHAKRVMMGVWSFLRQFMYTKFVIVCDEDVNARDWNDVIWAITTRMDPARDTTLIEHTPIDYLDFASPVAGLGSKMGLDATNKWPGETQREWGTPIHMDEAVKRRVDELWDSLGIFD.

Asparagine 172 lines the Mn(2+) pocket. Residues 175–177 (IYR), 189–191 (RWL), and 194–195 (RG) contribute to the prenylated FMN site. Mn(2+) is bound at residue glutamate 238. Aspartate 287 (proton donor) is an active-site residue.

It belongs to the UbiD family. Homohexamer. Prenylated FMN serves as cofactor. The cofactor is Mn(2+).

It is found in the cell membrane. The catalysed reaction is a 4-hydroxy-3-(all-trans-polyprenyl)benzoate + H(+) = a 2-(all-trans-polyprenyl)phenol + CO2. Its pathway is cofactor biosynthesis; ubiquinone biosynthesis. Its function is as follows. Catalyzes the decarboxylation of 3-octaprenyl-4-hydroxy benzoate to 2-octaprenylphenol, an intermediate step in ubiquinone biosynthesis. This is 3-octaprenyl-4-hydroxybenzoate carboxy-lyase from Tolumonas auensis (strain DSM 9187 / NBRC 110442 / TA 4).